A 316-amino-acid polypeptide reads, in one-letter code: MDARKNGVLITGGAGFIGKALITEMVERQIPLVSFDISDKPDSLPELSEYFNWYKFSYLESSQRIKELHEIVSRHNIKTVIHLATTMFPHESKKNIDKDCLENVYANVCFFKNLYENGCEKIIFASSGGTVYGKSDTPFSEDDALLPEISYGLSKVMTETYLRFIAKELNGKSISLRISNPYGEGQRIDGKQGVIPIFLNKISNDIPIDIIGSIESKRDYIYISDLVQAFMCSLEYEGHEDIFNIGSGESITLKKLIETIEFKLNKKAVIGFQDPIHTNANGIILDIKRAMAELGWRPTVVLDDGIDKLIKSIRCK.

16-17 (FI) is an NAD(+) binding site. Y151 serves as the catalytic Proton acceptor. Position 155 (K155) interacts with NAD(+).

Belongs to the NAD(P)-dependent epimerase/dehydratase family.

The catalysed reaction is dTDP-alpha-D-fucose + NAD(+) = dTDP-4-dehydro-6-deoxy-alpha-D-glucose + NADH + H(+). It catalyses the reaction dTDP-alpha-D-fucose + NADP(+) = dTDP-4-dehydro-6-deoxy-alpha-D-glucose + NADPH + H(+). It participates in bacterial outer membrane biogenesis; LPS O-antigen biosynthesis. With respect to regulation, inhibited by Cu(2+), while other divalent cations such as Ca(2+), Co(2+), Fe(2+), Mn(2+) and Mg(2+) have no obvious effects on enzyme activity. Catalyzes the stereospecific reduction of the C-4 keto group of dTDP-4-dehydro-6-deoxy-D-glucose, leading to dTDP-D-fucopyranose. This is a step in the biosynthesis of D-fucofuranose, a component of E.coli O52 O antigen. Is more efficient using NADH than NADPH as cosubstrate. This is dTDP-4-dehydro-6-deoxyglucose reductase (fcf1) from Escherichia coli.